Here is a 348-residue protein sequence, read N- to C-terminus: RNA 3'-terminal phosphate cyclase (348 aa).

Residues Q101 and 286 to 289 (HMAD) contribute to the ATP site. Catalysis depends on H312, which acts as the Tele-AMP-histidine intermediate.

It belongs to the RNA 3'-terminal cyclase family. Type 1 subfamily.

It localises to the cytoplasm. The catalysed reaction is a 3'-end 3'-phospho-ribonucleotide-RNA + ATP = a 3'-end 2',3'-cyclophospho-ribonucleotide-RNA + AMP + diphosphate. In terms of biological role, catalyzes the conversion of 3'-phosphate to a 2',3'-cyclic phosphodiester at the end of RNA. The mechanism of action of the enzyme occurs in 3 steps: (A) adenylation of the enzyme by ATP; (B) transfer of adenylate to an RNA-N3'P to produce RNA-N3'PP5'A; (C) and attack of the adjacent 2'-hydroxyl on the 3'-phosphorus in the diester linkage to produce the cyclic end product. The biological role of this enzyme is unknown but it is likely to function in some aspects of cellular RNA processing. This is RNA 3'-terminal phosphate cyclase from Pyrobaculum aerophilum (strain ATCC 51768 / DSM 7523 / JCM 9630 / CIP 104966 / NBRC 100827 / IM2).